A 324-amino-acid chain; its full sequence is CYFIP-related Rac1 interactor B (324 aa).

The N-myristoyl glycine moiety is linked to residue Gly2. A Glycyl lysine isopeptide (Lys-Gly) (interchain with G-Cter in ubiquitin) cross-link involves residue Lys74.

It belongs to the CYRI family. Interacts with RAC1 (GTP-bound form preferentially). Post-translationally, ubiquitinated at Lys-74 upon Salmonella bacterial infection.

The protein localises to the membrane. The protein resides in the mitochondrion. Its function is as follows. Negatively regulates RAC1 signaling and RAC1-driven cytoskeletal remodeling. Regulates chemotaxis, cell migration and epithelial polarization by controlling the polarity, plasticity, duration and extent of protrusions. Limits Rac1 mediated activation of the Scar/WAVE complex, focuses protrusion signals and regulates pseudopod complexity by inhibiting Scar/WAVE-induced actin polymerization. Protects against Salmonella bacterial infection. Attenuates processes such as macropinocytosis, phagocytosis and cell migration and restrict sopE-mediated bacterial entry. Also restricts infection mediated by Mycobacterium tuberculosis and Listeria monocytogenes. Involved in the regulation of mitochondrial dynamics and oxidative stress. This Homo sapiens (Human) protein is CYFIP-related Rac1 interactor B.